The chain runs to 241 residues: Carboxy-S-adenosyl-L-methionine synthase (241 aa).

S-adenosyl-L-methionine contacts are provided by residues Tyr38, 63–65 (GCS), 88–89 (DN), 116–117 (DI), Asn131, and Arg198.

Belongs to the class I-like SAM-binding methyltransferase superfamily. Cx-SAM synthase family. Homodimer.

It carries out the reaction prephenate + S-adenosyl-L-methionine = carboxy-S-adenosyl-L-methionine + 3-phenylpyruvate + H2O. Catalyzes the conversion of S-adenosyl-L-methionine (SAM) to carboxy-S-adenosyl-L-methionine (Cx-SAM). The protein is Carboxy-S-adenosyl-L-methionine synthase of Actinobacillus pleuropneumoniae serotype 7 (strain AP76).